A 446-amino-acid polypeptide reads, in one-letter code: Citrate/sodium symporter (446 aa).

Over 1–27 the chain is Cytoplasmic; the sequence is MTNMSQPPATEKKGVSDLLGFKIFGMP. The chain crosses the membrane as a helical span at residues 28-44; it reads LPLYAFALITLLLSHFY. The Periplasmic segment spans residues 45-50; sequence NALPTD. The chain crosses the membrane as a helical span at residues 51-71; that stretch reads IVGGFAIMFIIGAIFGEIGKR. Residues 72-80 are Cytoplasmic-facing; that stretch reads LPIFNKYIG. The chain crosses the membrane as a helical span at residues 81-95; it reads GAPVMIFLVAAYFVY. Over 96–115 the chain is Periplasmic; that stretch reads AGIFTQKEIDAISNVMDKSN. A helical transmembrane segment spans residues 116-130; sequence FLNLFIAVLITGAIL. The Cytoplasmic portion of the chain corresponds to 131–136; sequence SVNRRL. Residues 137-166 form a helical membrane-spanning segment; it reads LLKSLLGYIPTILMGIVGASIFGIAIGLVF. At 167–181 the chain is on the periplasmic side; sequence GIPVDRIMMLYVLPI. Residues Ile181 and Gly183 each contribute to the Na(+) site. An intramembrane region (helical) is located at residues 182–189; sequence MGGGNGAG. 2 residues coordinate citrate: Asn186 and Gly187. The Periplasmic portion of the chain corresponds to 190–212; sequence AVPLSEIYHSVTGRSREEYYSTA. A helical membrane pass occupies residues 213–233; the sequence is IAILTIANIFAIVFAAVLDII. Over 234–264 the chain is Cytoplasmic; that stretch reads GKKHTWLSGEGELVRKASFKVEEDEKTGQIT. Residues 265 to 287 form a helical membrane-spanning segment; that stretch reads HRETAVGLVLSTTCFLLAYVVAK. Topologically, residues 288-299 are periplasmic; it reads KILPSIGGVAIH. The chain crosses the membrane as a helical span at residues 300-315; sequence YFAWMVLIVAALNASG. The Cytoplasmic segment spans residues 316 to 327; the sequence is LCSPEIKAGAKR. Residues 328 to 351 form a helical membrane-spanning segment; that stretch reads LSDFFSKQLLWVLMVGVGVCYTDL. Over 352 to 359 the chain is Periplasmic; that stretch reads QEIINAIT. Residues 360–381 form a helical membrane-spanning segment; the sequence is FANVVIAAIIVIGAVLGAAIGG. Over 382–398 the chain is Cytoplasmic; that stretch reads WLMGFFPIESAITAGLC. 2 residues coordinate Na(+): Met399 and Asn401. Residues 399–406 constitute an intramembrane region (helical); that stretch reads MANRGGSG. Citrate is bound by residues Arg402, Gly404, and Ser405. The Cytoplasmic portion of the chain corresponds to 407–416; the sequence is DLEVLSACNR. A helical membrane pass occupies residues 417–438; sequence MNLISYAQISSRLGGGIVLVIA. Arg428 provides a ligand contact to citrate. Residues 439 to 446 lie on the Periplasmic side of the membrane; that stretch reads SIVFGMMI.

It belongs to the 2-hydroxycarboxylate transporter (2-HCT) (TC 2.A.24) family. Homodimer.

Its subcellular location is the cell inner membrane. The catalysed reaction is citrate(out) + 2 Na(+)(out) = citrate(in) + 2 Na(+)(in). Its activity is regulated as follows. In the absence of Na(+), transport is inhibited by the thiol reagents N-ethylmaleimide (NEM) and the methanethiosulfonate (MTS) derivatives MTSEA, MTSET and MTSES. However, inactivation by NEM, MTSES and MTSET is prevented by the presence of Na(+). In the absence of Na(+), the substrate citrate has no effect on the inactivation by permeable or impermeable thiol reagents. In contrast, when subsaturating concentrations of Na(+) are present, citrate significantly reduces inactivation, suggesting ordered binding of the substrate and co-ion; citrate is bound after Na(+). The membrane impermeable bulky maleimide AmdiS does not inactivate the transporter in right-side-out membrane vesicles. The apparent affinity for Na(+) decreases with increasing proton concentration. Protons cannot replace Na(+) in the translocation step but the decrease in apparent affinity for Na(+) towards lower pH suggests that protons can compete with Na(+) for the cation-binding sites. Secondary active transporter that catalyzes the uptake of citrate across the membrane with the concomitant uptake of sodium. There are conflicting data regarding exact substrate stoichiometry: the sodium/citrate stoichiometry was predicted to be 1, but the latest studies suggest that CitS transports citrate in symport with 2 sodium ions. Transports citrate as a divalent citrate anion, H-citrate(2-). Shows narrow substrate specificity and is very specific, transporting only citrate and to a low extent citromalate. Symport of Na(+) is absolutely required in the range pH 5-7 because no uptake can be detected in the absence of Na(+). Lithium can replace Na(+) in the symport reaction but it takes about a 200-fold higher concentration of Li(+) over Na(+) to achieve the same rate of uptake. In Klebsiella pneumoniae, this protein is Citrate/sodium symporter.